We begin with the raw amino-acid sequence, 262 residues long: Abhydrolase domain-containing protein ACTT2 (262 aa).

A Peroxisomal targeting signal type 1 motif is present at residues 260–262 (SKL).

The protein belongs to the AB hydrolase superfamily. AKT2 hydrolase family.

It is found in the peroxisome. Its pathway is mycotoxin biosynthesis. Abhydrolase domain-containing protein; part of the gene clusters that mediate the biosynthesis of the host-selective toxins (HSTs) ACT-toxins responsible for brown spot of tangerine disease by the tangerine pathotype which affects tangerines and mandarins. ACT-toxins consist of three moieties, 9,10-epoxy-8-hydroxy-9-methyl-decatrienoic acid (EDA), valine and a polyketide. ACT-toxin I is toxic to both citrus and pear; toxin II the 5''-deoxy derivative of ACT-toxin I, is highly toxic to pear and slightly toxic to citrus. On cellular level, ACT-toxins affect plasma membrane of susceptible cells and cause a sudden increase in loss of K(+) after a few minutes of toxin treatment. The acyl-CoA ligase ACTT1, the hydrolase ACTT2, the enoyl-CoA hydratases ACTT3 and ACTT6, and the acyl-CoA synthetase ACTT5 are all involved in the biosynthesis of the AK-, AF- and ACT-toxin common 9,10-epoxy-8-hydroxy-9-methyl-decatrienoic acid (EDA) structural moiety. The exact role of each enzyme, and of additional enzymes identified within the AF-toxin clusters have still to be determined. On the other hand, ACTTS1 to ACTTS4 are specific to the tangerine pathotype. The function of ACTTS3 is to elongate the polyketide chain portion of ACT-toxin that is unique to this toxin. The enoyl-reductase ACTTS2 might complement the missing enoyl-reductase (ER) domain in ACTTS3 in the synthesis of the polyketide portion of ACT-toxin. The roles of the nonribosomal peptide synthetases-related proteins ACTTS1 and ACTTS4 have also still not been elucidated. The protein is Abhydrolase domain-containing protein ACTT2 of Alternaria alternata (Alternaria rot fungus).